The following is a 37-amino-acid chain: Large ribosomal subunit protein bL36 (37 aa).

The protein belongs to the bacterial ribosomal protein bL36 family.

This is Large ribosomal subunit protein bL36 from Mesomycoplasma hyopneumoniae (strain 7448) (Mycoplasma hyopneumoniae).